Here is a 506-residue protein sequence, read N- to C-terminus: Trans-cinnamate 4-monooxygenase (506 aa).

The chain crosses the membrane as a helical span at residues 3–23 (DFVLLEKALLGLFIATIVAIT). Residues 214 to 219 (RSRLAQ) and alanine 307 each bind (E)-cinnamate. Residue cysteine 448 participates in heme binding.

Belongs to the cytochrome P450 family. It depends on heme as a cofactor.

It localises to the membrane. The enzyme catalyses (E)-cinnamate + reduced [NADPH--hemoprotein reductase] + O2 = (E)-4-coumarate + oxidized [NADPH--hemoprotein reductase] + H2O + H(+). Its pathway is phenylpropanoid metabolism; trans-4-coumarate biosynthesis; trans-4-coumarate from trans-cinnamate: step 1/1. In terms of biological role, catalyzes the first oxidative step of the phenylpropanoid pathway in higher plants by transforming trans-cinnamate into p-coumarate. The compounds formed by this pathway are essential components for lignification, pollination, and defense against ultraviolet light, predators and pathogens. This is Trans-cinnamate 4-monooxygenase (CYP73A10) from Petroselinum crispum (Parsley).